The chain runs to 957 residues: Glycine dehydrogenase (decarboxylating) (957 aa).

An N6-(pyridoxal phosphate)lysine modification is found at K708.

The protein belongs to the GcvP family. In terms of assembly, the glycine cleavage system is composed of four proteins: P, T, L and H. It depends on pyridoxal 5'-phosphate as a cofactor.

The catalysed reaction is N(6)-[(R)-lipoyl]-L-lysyl-[glycine-cleavage complex H protein] + glycine + H(+) = N(6)-[(R)-S(8)-aminomethyldihydrolipoyl]-L-lysyl-[glycine-cleavage complex H protein] + CO2. Functionally, the glycine cleavage system catalyzes the degradation of glycine. The P protein binds the alpha-amino group of glycine through its pyridoxal phosphate cofactor; CO(2) is released and the remaining methylamine moiety is then transferred to the lipoamide cofactor of the H protein. This chain is Glycine dehydrogenase (decarboxylating), found in Pectobacterium atrosepticum (strain SCRI 1043 / ATCC BAA-672) (Erwinia carotovora subsp. atroseptica).